A 99-amino-acid chain; its full sequence is Protein Tat (99 aa).

The tract at residues 1 to 20 (MELVDPNLDPWNHPGSQPTT) is disordered. An interaction with human CREBBP region spans residues 1–24 (MELVDPNLDPWNHPGSQPTTPCTR). The transactivation stretch occupies residues 1 to 48 (MELVDPNLDPWNHPGSQPTTPCTRCYCKWCCFHCYWCFTTKGLGISYG). Zn(2+)-binding residues include Cys-22, Cys-25, and Cys-27. Residues 22-37 (CTRCYCKWCCFHCYWC) are cysteine-rich. Lys-28 is modified (N6-acetyllysine; by host PCAF). 4 residues coordinate Zn(2+): Cys-30, His-33, Cys-34, and Cys-37. The interval 38–48 (FTTKGLGISYG) is core. Positions 48 to 99 (GRKKRRQRPRTPQSSQIHQDFVPKQPISQARGNPTGPKESKKEVESKAKTDP) are disordered. Positions 49–57 (RKKRRQRPR) match the Nuclear localization signal, RNA-binding (TAR), and protein transduction motif. Positions 49–86 (RKKRRQRPRTPQSSQIHQDFVPKQPISQARGNPTGPKE) are interaction with the host capping enzyme RNGTT. 2 positions are modified to N6-acetyllysine; by host EP300 and GCN5L2: Lys-50 and Lys-51. Asymmetric dimethylarginine; by host PRMT6 occurs at positions 52 and 53. Lys-71 participates in a covalent cross-link: Glycyl lysine isopeptide (Lys-Gly) (interchain with G-Cter in ubiquitin). Residues 85 to 99 (KESKKEVESKAKTDP) are compositionally biased toward basic and acidic residues.

It belongs to the lentiviruses Tat family. As to quaternary structure, interacts with host CCNT1. Associates with the P-TEFb complex composed at least of Tat, P-TEFb (CDK9 and CCNT1), TAR RNA, RNA Pol II. Recruits the HATs CREBBP, TAF1/TFIID, EP300, PCAF and GCN5L2. Interacts with host KAT5/Tip60; this interaction targets the latter to degradation. Interacts with the host deacetylase SIRT1. Interacts with host capping enzyme RNGTT; this interaction stimulates RNGTT. Binds to host KDR, and to the host integrins ITGAV/ITGB3 and ITGA5/ITGB1. Interacts with host KPNB1/importin beta-1 without previous binding to KPNA1/importin alpha-1. Interacts with EIF2AK2. Interacts with host nucleosome assembly protein NAP1L1; this interaction may be required for the transport of Tat within the nucleus, since the two proteins interact at the nuclear rim. Interacts with host C1QBP/SF2P32; this interaction involves lysine-acetylated Tat. Interacts with the host chemokine receptors CCR2, CCR3 and CXCR4. Interacts with host DPP4/CD26; this interaction may trigger an anti-proliferative effect. Interacts with host LDLR. Interacts with the host extracellular matrix metalloproteinase MMP1. Interacts with host PRMT6; this interaction mediates Tat's methylation. Interacts with, and is ubiquitinated by MDM2/Hdm2. Interacts with host PSMC3 and HTATIP2. Interacts with STAB1; this interaction may overcome SATB1-mediated repression of IL2 and IL2RA (interleukin) in T cells by binding to the same domain than HDAC1. Interacts (when acetylated) with human CDK13, thereby increasing HIV-1 mRNA splicing and promoting the production of the doubly spliced HIV-1 protein Nef. Interacts with host TBP; this interaction modulates the activity of transcriptional pre-initiation complex. Interacts with host RELA. Interacts with host PLSCR1; this interaction negatively regulates Tat transactivation activity by altering its subcellular distribution. Post-translationally, asymmetrical arginine methylation by host PRMT6 seems to diminish the transactivation capacity of Tat and affects the interaction with host CCNT1. Acetylation by EP300, CREBBP, GCN5L2/GCN5 and PCAF regulates the transactivation activity of Tat. EP300-mediated acetylation of Lys-50 promotes dissociation of Tat from the TAR RNA through the competitive binding to PCAF's bromodomain. In addition, the non-acetylated Tat's N-terminus can also interact with PCAF. PCAF-mediated acetylation of Lys-28 enhances Tat's binding to CCNT1. Lys-50 is deacetylated by SIRT1. In terms of processing, polyubiquitination by host MDM2 does not target Tat to degradation, but activates its transactivation function and fosters interaction with CCNT1 and TAR RNA. Post-translationally, phosphorylated by EIF2AK2 on serine and threonine residues adjacent to the basic region important for TAR RNA binding and function. Phosphorylation of Tat by EIF2AK2 is dependent on the prior activation of EIF2AK2 by dsRNA.

It localises to the host nucleus. Its subcellular location is the host nucleolus. It is found in the host cytoplasm. The protein localises to the secreted. Functionally, transcriptional activator that increases RNA Pol II processivity, thereby increasing the level of full-length viral transcripts. Recognizes a hairpin structure at the 5'-LTR of the nascent viral mRNAs referred to as the transactivation responsive RNA element (TAR) and recruits the cyclin T1-CDK9 complex (P-TEFb complex) that will in turn hyperphosphorylate the RNA polymerase II to allow efficient elongation. The CDK9 component of P-TEFb and other Tat-activated kinases hyperphosphorylate the C-terminus of RNA Pol II that becomes stabilized and much more processive. Other factors such as HTATSF1/Tat-SF1, SUPT5H/SPT5, and HTATIP2 are also important for Tat's function. Besides its effect on RNA Pol II processivity, Tat induces chromatin remodeling of proviral genes by recruiting the histone acetyltransferases (HATs) CREBBP, EP300 and PCAF to the chromatin. This also contributes to the increase in proviral transcription rate, especially when the provirus integrates in transcriptionally silent region of the host genome. To ensure maximal activation of the LTR, Tat mediates nuclear translocation of NF-kappa-B by interacting with host RELA. Through its interaction with host TBP, Tat may also modulate transcription initiation. Tat can reactivate a latently infected cell by penetrating in it and transactivating its LTR promoter. In the cytoplasm, Tat is thought to act as a translational activator of HIV-1 mRNAs. Its function is as follows. Extracellular circulating Tat can be endocytosed by surrounding uninfected cells via the binding to several surface receptors such as CD26, CXCR4, heparan sulfate proteoglycans (HSPG) or LDLR. Neurons are rarely infected, but they internalize Tat via their LDLR. Through its interaction with nuclear HATs, Tat is potentially able to control the acetylation-dependent cellular gene expression. Modulates the expression of many cellular genes involved in cell survival, proliferation or in coding for cytokines or cytokine receptors. Tat plays a role in T-cell and neurons apoptosis. Tat induced neurotoxicity and apoptosis probably contribute to neuroAIDS. Circulating Tat also acts as a chemokine-like and/or growth factor-like molecule that binds to specific receptors on the surface of the cells, affecting many cellular pathways. In the vascular system, Tat binds to ITGAV/ITGB3 and ITGA5/ITGB1 integrins dimers at the surface of endothelial cells and competes with bFGF for heparin-binding sites, leading to an excess of soluble bFGF. The sequence is that of Protein Tat from Homo sapiens (Human).